A 203-amino-acid polypeptide reads, in one-letter code: Auxin-responsive protein IAA4 (203 aa).

The segment at 1–31 (MEECKGGGMSPSSSMDSSTHPALSTTSSAAT) is disordered. Positions 10–31 (SPSSSMDSSTHPALSTTSSAAT) are enriched in low complexity. Positions 40-44 (LRLGL) match the EAR-like (transcriptional repression) motif. The region spanning 108-202 (TLFVKVYMEG…KKLRIARMDK (95 aa)) is the PB1 domain.

Belongs to the Aux/IAA family. Homodimers and heterodimers.

It is found in the nucleus. Its function is as follows. Aux/IAA proteins are short-lived transcriptional factors that function as repressors of early auxin response genes at low auxin concentrations. The chain is Auxin-responsive protein IAA4 (IAA4) from Oryza sativa subsp. japonica (Rice).